The sequence spans 589 residues: Arginine--tRNA ligase (589 aa).

Positions 131–141 (ANPTGPLHVGH) match the 'HIGH' region motif.

It belongs to the class-I aminoacyl-tRNA synthetase family. As to quaternary structure, monomer.

Its subcellular location is the cytoplasm. The catalysed reaction is tRNA(Arg) + L-arginine + ATP = L-arginyl-tRNA(Arg) + AMP + diphosphate. The sequence is that of Arginine--tRNA ligase from Legionella pneumophila (strain Paris).